Reading from the N-terminus, the 201-residue chain is MAAGSGEQELRAIIRDLGCGPYFLGTFDKRFPGFMAPHKVACAIVNTAGRETGGEHWLAFAWNPRSNTCYLFDPFGFSDQRLKQIYQFEYEGLLRRSALATKDRCVTWKSHQTCRVRVGRCGFSAACSTACAWPTPMDKNPTMNLLTGVPNGMLQSPQVEPTLRRNQEALYRFLNSHSAYFRSHRARIEKATAFDRMNQDM.

Residues His-56, Asp-73, and Cys-121 contribute to the active site.

This sequence belongs to the peptidase C5 family. Interacts with protease cofactor pVI-C; this interaction is necessary for protease activation.

The protein resides in the virion. It localises to the host nucleus. It catalyses the reaction Cleaves proteins of the adenovirus and its host cell at two consensus sites: -Yaa-Xaa-Gly-Gly-|-Xaa- and -Yaa-Xaa-Gly-Xaa-|-Gly- (in which Yaa is Met, Ile or Leu, and Xaa is any amino acid).. Requires DNA and protease cofactor for maximal activation. Inside nascent virions, becomes partially activated by binding to the viral DNA, allowing it to cleave the cofactor that binds to the protease and fully activates it. Actin, like the viral protease cofactor, seems to act as a cofactor in the cleavage of cytokeratin 18 and of actin itself. Functionally, cleaves viral precursor proteins (pTP, pIIIa, pVI, pVII, pVIII, and pX) inside newly assembled particles giving rise to mature virions. Protease complexed to its cofactor slides along the viral DNA to specifically locate and cleave the viral precursors. Mature virions have a weakened organization compared to the unmature virions, thereby facilitating subsequent uncoating. Without maturation, the particle lacks infectivity and is unable to uncoat. Late in adenovirus infection, in the cytoplasm, may participate in the cytoskeleton destruction. Cleaves host cell cytoskeletal keratins K7 and K18. This is Protease from Homo sapiens (Human).